The sequence spans 315 residues: GTP cyclohydrolase MptA (315 aa).

Belongs to the GTP cyclohydrolase IV family. In terms of assembly, homodimer. Requires Fe(2+) as cofactor.

The catalysed reaction is GTP + H2O = 7,8-dihydroneopterin 2',3'-cyclic phosphate + formate + diphosphate + H(+). Its pathway is cofactor biosynthesis; 5,6,7,8-tetrahydromethanopterin biosynthesis. Functionally, converts GTP to 7,8-dihydro-D-neopterin 2',3'-cyclic phosphate, the first intermediate in the biosynthesis of coenzyme methanopterin. The polypeptide is GTP cyclohydrolase MptA (Methanococcus maripaludis (strain DSM 14266 / JCM 13030 / NBRC 101832 / S2 / LL)).